Here is a 155-residue protein sequence, read N- to C-terminus: Aspartate carbamoyltransferase regulatory chain (155 aa).

Zn(2+) is bound by residues C113, C118, C141, and C144.

Belongs to the PyrI family. Contains catalytic and regulatory chains. Requires Zn(2+) as cofactor.

Involved in allosteric regulation of aspartate carbamoyltransferase. This Methanococcus aeolicus (strain ATCC BAA-1280 / DSM 17508 / OCM 812 / Nankai-3) protein is Aspartate carbamoyltransferase regulatory chain.